The following is a 195-amino-acid chain: Replication restart protein PriC (195 aa).

It belongs to the PriC family. As to quaternary structure, monomer. Component of the replication restart primosome, which is composed of PriA, PriB, PriC, DnaB and DnaT; DnaG primase associates transiently with this complex. Interacts with the C-terminus of SSB; this interaction is required to load the main replicative helicase onto substrate replication forks. Interacts with helicase DnaB alone and in the DnaB-DnaC complex, probably 1:1 binding with DnaB.

Involved in the restart of stalled replication forks, which reloads the DnaB replicative helicase on sites other than the origin of replication. Recognizes abandoned replication forks and remodels DNA single-stranded binding protein (SSB) on ssDNA to uncover a loading site for DnaB. There are several restart pathways, the PriA-PriC pathway is a minor restart pathway. Part of the minor PriC-Rep pathway for restart of stalled replication forks, which has a different substrate specificity than PriA. Part of the major restart pathway with PriA, PriB, DnaB, DnaT and DnaG primase. priB and priC have redundant roles in the cell. This chain is Replication restart protein PriC, found in Haemophilus influenzae (strain ATCC 51907 / DSM 11121 / KW20 / Rd).